A 236-amino-acid polypeptide reads, in one-letter code: ATP synthase subunit a (236 aa).

Helical transmembrane passes span 17 to 37, 75 to 95, 112 to 132, 174 to 194, and 208 to 228; these read LSDM…AVAA, FLTL…LGLP, DATV…YYGV, IYAG…YGVL, and FSIF…MVYM.

This sequence belongs to the ATPase A chain family. F-type ATPases have 2 components, CF(1) - the catalytic core - and CF(0) - the membrane proton channel. CF(1) has five subunits: alpha(3), beta(3), gamma(1), delta(1), epsilon(1). CF(0) has three main subunits: a(1), b(2) and c(9-12). The alpha and beta chains form an alternating ring which encloses part of the gamma chain. CF(1) is attached to CF(0) by a central stalk formed by the gamma and epsilon chains, while a peripheral stalk is formed by the delta and b chains.

The protein localises to the cell membrane. Functionally, key component of the proton channel; it plays a direct role in the translocation of protons across the membrane. This chain is ATP synthase subunit a, found in Geobacillus stearothermophilus (Bacillus stearothermophilus).